Consider the following 153-residue polypeptide: Bifunctional protein GAL10 (153 aa).

The segment at 1–153 (MSDDIFLVTG…IPIPEHCPME (153 aa)) is galactowaldenase.

The protein in the N-terminal section; belongs to the NAD(P)-dependent epimerase/dehydratase family. It in the C-terminal section; belongs to the aldose epimerase family. NAD(+) is required as a cofactor.

It carries out the reaction UDP-alpha-D-glucose = UDP-alpha-D-galactose. The catalysed reaction is alpha-D-glucose = beta-D-glucose. The protein operates within carbohydrate metabolism; galactose metabolism. It functions in the pathway carbohydrate metabolism; hexose metabolism. Mutarotase converts alpha-aldose to the beta-anomer. It is active on D-glucose, L-arabinose, D-xylose, D-galactose, maltose and lactose. The polypeptide is Bifunctional protein GAL10 (GAL10) (Candida maltosa (Yeast)).